The primary structure comprises 154 residues: AP-1 complex subunit sigma-3 (154 aa).

The protein belongs to the adaptor complexes small subunit family. As to quaternary structure, adaptor protein complex 1 (AP-1) is a heterotetramer composed of two large adaptins (gamma-type subunit AP1G1 and beta-type subunit AP1B1), a medium adaptin (mu-type subunit AP1M1 or AP1M2) and a small adaptin (sigma-type subunit AP1S1 or AP1S2 or AP1S3). As to expression, widely expressed.

It is found in the golgi apparatus. It localises to the cytoplasmic vesicle membrane. The protein resides in the membrane. The protein localises to the clathrin-coated pit. In terms of biological role, subunit of clathrin-associated adaptor protein complex 1 that plays a role in protein sorting in the late-Golgi/trans-Golgi network (TGN) and/or endosomes. The AP complexes mediate both the recruitment of clathrin to membranes and the recognition of sorting signals within the cytosolic tails of transmembrane cargo molecules. Involved in TLR3 trafficking. This Homo sapiens (Human) protein is AP-1 complex subunit sigma-3 (AP1S3).